A 513-amino-acid polypeptide reads, in one-letter code: Histidine ammonia-lyase (513 aa).

A cross-link (5-imidazolinone (Ala-Gly)) is located at residues 144–146 (ASG). Ser145 carries the 2,3-didehydroalanine (Ser) modification.

The protein belongs to the PAL/histidase family. Post-translationally, contains an active site 4-methylidene-imidazol-5-one (MIO), which is formed autocatalytically by cyclization and dehydration of residues Ala-Ser-Gly.

Its subcellular location is the cytoplasm. It catalyses the reaction L-histidine = trans-urocanate + NH4(+). The protein operates within amino-acid degradation; L-histidine degradation into L-glutamate; N-formimidoyl-L-glutamate from L-histidine: step 1/3. The polypeptide is Histidine ammonia-lyase (Streptococcus pyogenes serotype M1).